Consider the following 348-residue polypeptide: Ion-translocating oxidoreductase complex subunit D (348 aa).

The next 3 helical transmembrane spans lie at 25–45 (ILAA…GTFI), 68–88 (PISP…IGVA), and 124–144 (AMAA…TWAA). Thr182 is modified (FMN phosphoryl threonine). Transmembrane regions (helical) follow at residues 211–231 (TGEG…FLLA), 237–257 (WHIS…GFGA), 263–283 (ASPL…FIAT), 296–316 (LLFG…GGYP), and 317–337 (DGVA…DYYI).

This sequence belongs to the NqrB/RnfD family. As to quaternary structure, the complex is composed of six subunits: RnfA, RnfB, RnfC, RnfD, RnfE and RnfG. Requires FMN as cofactor.

The protein resides in the cell inner membrane. Its function is as follows. Part of a membrane-bound complex that couples electron transfer with translocation of ions across the membrane. This is Ion-translocating oxidoreductase complex subunit D from Shewanella amazonensis (strain ATCC BAA-1098 / SB2B).